Consider the following 417-residue polypeptide: Argininosuccinate synthase (417 aa).

Residue 9–17 (AYSGGLDTS) coordinates ATP. Residue Y87 participates in L-citrulline binding. ATP is bound at residue G117. The L-aspartate site is built by T119, N123, and D124. N123 serves as a coordination point for L-citrulline. L-citrulline-binding residues include R127, S175, S184, E260, and Y272.

Belongs to the argininosuccinate synthase family. Type 1 subfamily. As to quaternary structure, homotetramer.

The protein localises to the cytoplasm. It carries out the reaction L-citrulline + L-aspartate + ATP = 2-(N(omega)-L-arginino)succinate + AMP + diphosphate + H(+). Its pathway is amino-acid biosynthesis; L-arginine biosynthesis; L-arginine from L-ornithine and carbamoyl phosphate: step 2/3. The protein is Argininosuccinate synthase of Oceanobacillus iheyensis (strain DSM 14371 / CIP 107618 / JCM 11309 / KCTC 3954 / HTE831).